Consider the following 225-residue polypeptide: Non-structural protein V (225 aa).

The span at 145–157 (SNEPVSSAGSAQD) shows a compositional bias: polar residues. The disordered stretch occupies residues 145–173 (SNEPVSSAGSAQDPNFKRGGANRERARGN). Zn(2+) is bound by residues H174, C193, C197, C209, C211, C214, C218, and C221.

This sequence belongs to the paramyxoviruses V protein family. As to quaternary structure, interacts with host IFIH1/MDA5 and DHX58/LGP2. Forms with host DDB1, CUL4A, STAT1 and STAT2 the HPIV2 virus V-dependent complex (VDC); this complex targets host STAT2 to proteasomal degradation.

The protein localises to the host nucleus. Its function is as follows. Plays an essential role in the inhibition of host immune response. Prevents the establishment of cellular antiviral state by blocking interferon-alpha/beta (IFN-alpha/beta) production and signaling pathway. Interacts with host IFIH1/MDA5 and DHX58/LGP2 to inhibit the transduction pathway involved in the activation of IFN-beta promoter, thus protecting the virus against cell antiviral state. Efficiently blocks type I IFN signaling following infection by targeting host STAT2 for proteasomal degradation. Also plays a role in viral growth by promoting host RhoA-induced F-actin formation. This chain is Non-structural protein V (P/V), found in Homo sapiens (Human).